Reading from the N-terminus, the 249-residue chain is 5'-nucleotidase SurE (249 aa).

4 residues coordinate a divalent metal cation: Asp8, Asp9, Ser39, and Asn91.

Belongs to the SurE nucleotidase family. A divalent metal cation serves as cofactor.

It localises to the cytoplasm. The enzyme catalyses a ribonucleoside 5'-phosphate + H2O = a ribonucleoside + phosphate. Its function is as follows. Nucleotidase that shows phosphatase activity on nucleoside 5'-monophosphates. The chain is 5'-nucleotidase SurE from Pseudomonas putida (strain W619).